An 804-amino-acid polypeptide reads, in one-letter code: MQLAVLTLALCWAYPVTIYISYLLSRLGIALYRKHKDSTTGAWYEKHRKAAFTAIFWLQLVQCFDLAISITITGYAMNISPQVEAWWVDKEFLASNIAVFMFLAAGLLPDPDVPFSPSLSHSHAWIAGIIMEALQLAMFCNQQSPVSVLSRVEYLQLGLVMVRLVLFVAMVALYFQPMYAWSRIQLDETEPLLGEVDSKPVRDAQHGGWLDYVVGFSTLFPFLWPSDSRRLQLRAIFCFVLLVIQRVVNILVPHQLGIVVAHLGSGTIPYQKIAIYIALRALQGQQGVIGSIRALLWIPVSQSTYRRLTSSAFEHVLSLSLEFHLGKRIGEVMSALSKGSALNTFLDGLVFQLFPMVADLWIAALYFLIQFDAFYSLIVITVTWLYLFVTIYMAKYRGRARREMVNREREMEAAKTDALMSYETVHHNSAVPHEINRFNRLVQAFQKAEYFVFFSLNLLNATQNLLFTAGVAIVCLLCAYQISADMQQVAMFVTLLTYLAQLQAPLNFFGSFYTQVQNNLVDAERMLALFKEKPLVQDRDGAIDLNTCAGRVEFTHVNFAYDERRPALQDVSFTVEPGTSTAIVGESGSGKSTILKLLFRFYDVAAGSVRFDGVDARDMTIASLRSHLGVVPQDTILFNDTLLYNLLYARPQATMEEVYAACRAASIHDRIMSFPDGYETKVGERGLRLSGGEKQRIAIARTFLRSPQILLLDEATASLDSQTERQIQGALDNIAKGRTTITIAHRLSTITKANQIIVLHQGRIVEKGTHEELLAANGMYSQMWAKQTKAKEKKDSNATLVEVA.

9 consecutive transmembrane segments (helical) span residues leucine 3 to leucine 23, phenylalanine 52 to isoleucine 72, isoleucine 97 to proline 117, leucine 119 to phenylalanine 139, leucine 155 to phenylalanine 175, histidine 206 to serine 226, phenylalanine 239 to valine 259, leucine 349 to isoleucine 369, and alanine 373 to methionine 393. In terms of domain architecture, ABC transmembrane type-1 spans isoleucine 236–asparagine 518. N-linked (GlcNAc...) asparagine glycosylation occurs at asparagine 460. 2 consecutive transmembrane segments (helical) span residues asparagine 464 to alanine 484 and valine 489 to phenylalanine 509. An ABC transporter domain is found at valine 552–lysine 786. ATP is bound at residue glycine 585–serine 592. N-linked (GlcNAc...) asparagine glycans are attached at residues asparagine 639 and asparagine 797.

It belongs to the ABC transporter superfamily. ABCB family. Heavy Metal importer (TC 3.A.1.210) subfamily.

It is found in the membrane. Functionally, ABC transporter; part of the gene cluster that mediates the biosynthesis of aspirochlorine (or antibiotic A30641), an unusual halogenated spiro compound with distinctive antifungal properties due to selective inhibition of protein biosynthesis, and which is also active against bacteria, viruses, and murine tumor cells. The protein is ABC transporter aclQ of Aspergillus oryzae (strain ATCC 42149 / RIB 40) (Yellow koji mold).